The following is a 615-amino-acid chain: Putative binding protein BruAb2_0648 (615 aa).

Positions 1 to 29 (MLNRFIAFFRSVFLIGLVATAFGALPARA) are cleaved as a signal peptide.

This sequence belongs to the bacterial solute-binding protein 5 family.

Its subcellular location is the periplasm. This chain is Putative binding protein BruAb2_0648, found in Brucella abortus biovar 1 (strain 9-941).